We begin with the raw amino-acid sequence, 81 residues long: Large ribosomal subunit protein bL31B (81 aa).

The protein belongs to the bacterial ribosomal protein bL31 family. Type B subfamily. As to quaternary structure, part of the 50S ribosomal subunit.

This Bacillus cereus (strain G9842) protein is Large ribosomal subunit protein bL31B.